Here is a 277-residue protein sequence, read N- to C-terminus: Phosphate import ATP-binding protein PstB 2 (277 aa).

The ABC transporter domain maps to 31-272; it reads IEVPGLSLFY…PAKKQTEDYI (242 aa). 63 to 70 lines the ATP pocket; the sequence is GPSGCGKS.

The protein belongs to the ABC transporter superfamily. Phosphate importer (TC 3.A.1.7) family. As to quaternary structure, the complex is composed of two ATP-binding proteins (PstB), two transmembrane proteins (PstC and PstA) and a solute-binding protein (PstS).

Its subcellular location is the cell inner membrane. The enzyme catalyses phosphate(out) + ATP + H2O = ADP + 2 phosphate(in) + H(+). Its function is as follows. Part of the ABC transporter complex PstSACB involved in phosphate import. Responsible for energy coupling to the transport system. This chain is Phosphate import ATP-binding protein PstB 2, found in Pseudomonas putida (strain ATCC 47054 / DSM 6125 / CFBP 8728 / NCIMB 11950 / KT2440).